The following is a 318-amino-acid chain: MIIVTGGAGFIGSNIVKGLNNLGIDDILVVDNLKNASKHKNLNRIKFRDYIDKEDFNLDYLTSFVNNNKVEAIFHQGACSDTMETDGKYMMKNNYEYTKNILHICLDKKIRLFYASSASVYGNGENGFEEDEKNEYPLNVYAFSKYHFDRYLNKLFKENKVNSQVVGLRYFNVYGPQENHKGRMASVAFHLFNQIKAGERMKIFEGSENFLRDFIHIDDVVSVNNFFFENPNKSGIFNCGTGNAESFVEIAKALKEVYKSASIEYIAFPDALRGKYQKYTQADLKKLRAAGYDKPFMNVNTGVKKYAEVLEKSGGYLM.

NADP(+) is bound by residues 10–11 (FI), 31–32 (DN), Lys-38, Lys-53, 76–80 (QGACS), and Asn-93. Tyr-141 serves as the catalytic Proton acceptor. Lys-145 contributes to the NADP(+) binding site. Asn-172 provides a ligand contact to substrate. NADP(+)-binding residues include Val-173 and Lys-181. The Proton acceptor role is filled by Lys-181. Residues Arg-183, His-190, 204-207 (FEGS), Arg-212, and Tyr-276 contribute to the substrate site.

Belongs to the NAD(P)-dependent epimerase/dehydratase family. HldD subfamily. Homopentamer. The cofactor is NADP(+).

The enzyme catalyses ADP-D-glycero-beta-D-manno-heptose = ADP-L-glycero-beta-D-manno-heptose. It participates in nucleotide-sugar biosynthesis; ADP-L-glycero-beta-D-manno-heptose biosynthesis; ADP-L-glycero-beta-D-manno-heptose from D-glycero-beta-D-manno-heptose 7-phosphate: step 4/4. Catalyzes the interconversion between ADP-D-glycero-beta-D-manno-heptose and ADP-L-glycero-beta-D-manno-heptose via an epimerization at carbon 6 of the heptose. The chain is ADP-L-glycero-D-manno-heptose-6-epimerase from Brachyspira hyodysenteriae (strain ATCC 49526 / WA1).